The sequence spans 449 residues: Tubulin alpha-2 chain (449 aa).

Residues Gln-11, Glu-71, Ser-140, Gly-144, Thr-145, Thr-179, Asn-206, and Asn-228 each coordinate GTP. Glu-71 contributes to the Mg(2+) binding site. Residue Glu-254 is part of the active site.

It belongs to the tubulin family. As to quaternary structure, dimer of alpha and beta chains. A typical microtubule is a hollow water-filled tube with an outer diameter of 25 nm and an inner diameter of 15 nM. Alpha-beta heterodimers associate head-to-tail to form protofilaments running lengthwise along the microtubule wall with the beta-tubulin subunit facing the microtubule plus end conferring a structural polarity. Microtubules usually have 13 protofilaments but different protofilament numbers can be found in some organisms and specialized cells. Mg(2+) is required as a cofactor.

It is found in the cytoplasm. It localises to the cytoskeleton. The catalysed reaction is GTP + H2O = GDP + phosphate + H(+). Its function is as follows. Tubulin is the major constituent of microtubules, a cylinder consisting of laterally associated linear protofilaments composed of alpha- and beta-tubulin heterodimers. Microtubules grow by the addition of GTP-tubulin dimers to the microtubule end, where a stabilizing cap forms. Below the cap, tubulin dimers are in GDP-bound state, owing to GTPase activity of alpha-tubulin. This chain is Tubulin alpha-2 chain (tub1), found in Schizosaccharomyces pombe (strain 972 / ATCC 24843) (Fission yeast).